The following is a 357-amino-acid chain: O-methyltransferase 1, chloroplastic (357 aa).

The transit peptide at M1–F53 directs the protein to the chloroplast. The tract at residues R50–E71 is disordered.

This sequence belongs to the methyltransferase superfamily. LCMT family. Expressed in roots, leaf sheaths, flag leaves and panicles.

The protein resides in the plastid. The protein localises to the chloroplast. It carries out the reaction N-acetylserotonin + S-adenosyl-L-methionine = melatonin + S-adenosyl-L-homocysteine + H(+). The protein operates within aromatic compound metabolism; melatonin biosynthesis; melatonin from serotonin: step 1/2. Its function is as follows. Involved in melatonin biosynthesis. Can function as acetylserotonin O-methyltransferase. Catalyzes the transfer of a methyl group onto N-acetylserotonin, producing melatonin (N-acetyl-5-methoxytryptamine). Involved in the regulation of jasmonate- and brassinosteroid-mediated plant growth and defense responses. The protein is O-methyltransferase 1, chloroplastic of Oryza sativa subsp. japonica (Rice).